A 179-amino-acid chain; its full sequence is ATP-dependent protease subunit HslV (179 aa).

Threonine 6 is a catalytic residue. Na(+) contacts are provided by serine 164, cysteine 167, and threonine 170.

Belongs to the peptidase T1B family. HslV subfamily. As to quaternary structure, a double ring-shaped homohexamer of HslV is capped on each side by a ring-shaped HslU homohexamer. The assembly of the HslU/HslV complex is dependent on binding of ATP.

The protein localises to the cytoplasm. It carries out the reaction ATP-dependent cleavage of peptide bonds with broad specificity.. With respect to regulation, allosterically activated by HslU binding. In terms of biological role, protease subunit of a proteasome-like degradation complex believed to be a general protein degrading machinery. This is ATP-dependent protease subunit HslV from Listeria monocytogenes serotype 4b (strain CLIP80459).